We begin with the raw amino-acid sequence, 278 residues long: Non-haem bromoperoxidase BPO-A2 (278 aa).

Positions 26–264 constitute an AB hydrolase-1 domain; the sequence is PVVLIHGFPL…GAPHGLLWTH (239 aa). Residues serine 99, aspartate 229, and histidine 258 contribute to the active site.

The protein belongs to the AB hydrolase superfamily. Bacterial non-heme haloperoxidase / perhydrolase family. In terms of assembly, homotrimer.

May be a chlorinating enzyme involved in 7-chlorotetracycline biosynthesis. In Kitasatospora aureofaciens (Streptomyces aureofaciens), this protein is Non-haem bromoperoxidase BPO-A2 (bpoA2).